The chain runs to 458 residues: F-box/LRR-repeat protein At5g02910 (458 aa).

One can recognise an F-box domain in the interval 10–56 (MDFISSLPDEILHHILSSVPTKSAIRTSLLSKRWRYVWSETPSLSID). LRR repeat units lie at residues 57 to 84 (CRRA…HLHT), 86 to 112 (LLNR…SLES), 133 to 161 (KQLF…LSLS), 162 to 187 (NCTL…ELLY), 226 to 251 (CLRL…DLNI), 260 to 285 (TAGF…TIGG), 325 to 353 (KLLR…HLND), and 389 to 414 (ESNL…VVLL).

This chain is F-box/LRR-repeat protein At5g02910, found in Arabidopsis thaliana (Mouse-ear cress).